Consider the following 76-residue polypeptide: Glutathione S-transferase (76 aa).

The 40-residue stretch at 1 to 40 folds into the GST N-terminal domain; that stretch reads XVAFETVPVDLMKGEHKQPAYLALQPFGTVPAVVDGDYXL. Positions 41 to 76 constitute a GST C-terminal domain; it reads LSAVLDVYEAHLHGYLAGDFVSLADLAHLPFTDYLV.

It belongs to the GST superfamily. Theta family.

The protein localises to the cytoplasm. It carries out the reaction RX + glutathione = an S-substituted glutathione + a halide anion + H(+). Functionally, conjugation of reduced glutathione to a wide number of exogenous and endogenous hydrophobic electrophiles. This Brassica oleracea var. italica (Broccoli) protein is Glutathione S-transferase.